Here is a 175-residue protein sequence, read N- to C-terminus: NADH-ubiquinone oxidoreductase chain 6 (175 aa).

Transmembrane regions (helical) follow at residues 1–21, 25–45, 47–67, 88–108, and 149–169; these read MMTYIVFILSTVFVVSFVSFS, SPIYGGFGLIVAGGTGCGIVL, FGGSFLGLMVFLIYLGGMLVV, AVLAMFITGVLAELLTACYIL, and YGTWLVVVTGWSLLIGVLVIM.

The protein belongs to the complex I subunit 6 family. In terms of assembly, core subunit of respiratory chain NADH dehydrogenase (Complex I) which is composed of 45 different subunits.

It is found in the mitochondrion inner membrane. The catalysed reaction is a ubiquinone + NADH + 5 H(+)(in) = a ubiquinol + NAD(+) + 4 H(+)(out). Its function is as follows. Core subunit of the mitochondrial membrane respiratory chain NADH dehydrogenase (Complex I) which catalyzes electron transfer from NADH through the respiratory chain, using ubiquinone as an electron acceptor. Essential for the catalytic activity and assembly of complex I. This Felis catus (Cat) protein is NADH-ubiquinone oxidoreductase chain 6 (MT-ND6).